The primary structure comprises 1011 residues: CRM-domain containing factor CFM2, chloroplastic (1011 aa).

Residues 1-45 constitute a chloroplast transit peptide; that stretch reads MLLPLFHQQPLILAKTFPDRIFPPFLVPNTLVSRRNVSRANSGIF. Positions 77–90 are enriched in basic and acidic residues; the sequence is HDSPTRRITGEESG. The disordered stretch occupies residues 77–96; it reads HDSPTRRITGEESGKNSPGE. 3 consecutive CRM domains span residues 164-260, 376-473, and 577-677; these read LTLP…YFVS, PKLT…AVSS, and EGIT…QCLR. 2 disordered regions span residues 721–810 and 841–872; these read DSAT…GNSL and LNANRKLPGSSTGSGSQISALRERKSENDGLV. The span at 722 to 736 shows a compositional bias: polar residues; the sequence is SATNETWSDGESSNM. Positions 743–757 are enriched in basic and acidic residues; the sequence is ENQHTEPEKAREKIE. The segment covering 762–771 has biased composition (polar residues); it reads SDLSVPSSGE. A compositionally biased stretch (acidic residues) spans 772-782; it reads ENWEDDSEGEV. Polar residues predominate over residues 849 to 859; it reads GSSTGSGSQIS. The CRM 4 domain occupies 873 to 972; sequence TDLSNRERLI…WGAEEEMKSF (100 aa).

Interacts with RNA. Part of large ribonucleo-protein particles that contain CAF1 and/or CAF2.

It is found in the plastid. The protein localises to the chloroplast stroma. In terms of biological role, binds specific group II introns in chloroplasts and facilitates their splicing. Acts on both subgroup IIA and subgroup IIB introns. The substrates of the subgroup IIB also require the CRM domain proteins CAF1 or CAF2, with a simultaneous binding of CFM2 and CAF1 or CAF2. Can bind to and promote the splicing of the single group I intron in chloroplast tRNA transcript of trnL-UAA gene. The sequence is that of CRM-domain containing factor CFM2, chloroplastic from Arabidopsis thaliana (Mouse-ear cress).